The chain runs to 89 residues: Small ribosomal subunit protein uS15 (89 aa).

This sequence belongs to the universal ribosomal protein uS15 family. Part of the 30S ribosomal subunit. Forms a bridge to the 50S subunit in the 70S ribosome, contacting the 23S rRNA.

In terms of biological role, one of the primary rRNA binding proteins, it binds directly to 16S rRNA where it helps nucleate assembly of the platform of the 30S subunit by binding and bridging several RNA helices of the 16S rRNA. Forms an intersubunit bridge (bridge B4) with the 23S rRNA of the 50S subunit in the ribosome. The polypeptide is Small ribosomal subunit protein uS15 (Bdellovibrio bacteriovorus (strain ATCC 15356 / DSM 50701 / NCIMB 9529 / HD100)).